The sequence spans 144 residues: VIIGDIMELHHKKHHATYTNNLNAAEEKLAAAHAEGDIGGMIALQPALKFNGGGFINHCIFWTNLSPQGGGVPEGDLADAINRDFGSFDSFKTTLTAATVAIQGSGWGWLGFDPKTHHLKIATCVNQDPLQATTGMVPLFGIDV.

Residues histidine 10, histidine 58, and aspartate 143 each coordinate Mn(2+).

It belongs to the iron/manganese superoxide dismutase family. As to quaternary structure, homotetramer. It depends on Mn(2+) as a cofactor.

Its subcellular location is the mitochondrion matrix. The catalysed reaction is 2 superoxide + 2 H(+) = H2O2 + O2. Functionally, destroys superoxide anion radicals which are normally produced within the cells and which are toxic to biological systems. This chain is Superoxide dismutase [Mn], mitochondrial, found in Apostichopus californicus (California sea cucumber).